We begin with the raw amino-acid sequence, 325 residues long: Ubiquitin thioesterase OTU1 (325 aa).

The interval 7–86 (RIRSKTGVEN…NVSSISSNPG (80 aa)) is UBX-like. One can recognise an OTU domain in the interval 123-246 (ATRRVTDDDN…GIHYDALSIC (124 aa)). The cys-loop stretch occupies residues 128–134 (TDDDNSC). Residue Asp131 is part of the active site. The active-site Nucleophile is the Cys134. Residues 185-195 (IQNPKNWGGAI) are variable-loop. The his-loop stretch occupies residues 235-239 (YDGIH). Ile238 contacts substrate. Residue His239 is part of the active site. The S2 site stretch occupies residues 265–270 (KDSLAK). The C2H2-type zinc finger occupies 292–316 (LICLNCNKTLKGEKEAAIHASTTGH). The active site involves His316.

The protein resides in the cytoplasm. It catalyses the reaction Thiol-dependent hydrolysis of ester, thioester, amide, peptide and isopeptide bonds formed by the C-terminal Gly of ubiquitin (a 76-residue protein attached to proteins as an intracellular targeting signal).. In terms of biological role, hydrolase that can remove conjugated ubiquitin from proteins and may therefore play an important regulatory role at the level of protein turnover by preventing degradation. The sequence is that of Ubiquitin thioesterase OTU1 (yod1) from Dictyostelium discoideum (Social amoeba).